We begin with the raw amino-acid sequence, 397 residues long: Phosphonopyruvate decarboxylase (397 aa).

It belongs to the TPP enzyme family. It depends on thiamine diphosphate as a cofactor. Requires Mg(2+) as cofactor.

The enzyme catalyses 3-phosphonopyruvate + H(+) = phosphonoacetaldehyde + CO2. Its pathway is secondary metabolite biosynthesis; bialaphos biosynthesis. Its function is as follows. Involved in the biosynthesis of phosphinothricin tripeptide (PTT), also known as bialaphos (BA), a natural-product antibiotic and potent herbicide. Catalyzes the decarboxylation of phosphonopyruvate (PnPy) to generate phosphonoacetaldehyde (PnAA). The chain is Phosphonopyruvate decarboxylase from Streptomyces viridochromogenes (strain DSM 40736 / JCM 4977 / BCRC 1201 / Tue 494).